A 186-amino-acid polypeptide reads, in one-letter code: Protein GrpE (186 aa).

Residues 1-13 (MSENTQPEQNQPL) are compositionally biased toward polar residues. Residues 1–22 (MSENTQPEQNQPLTGAPSPEEL) are disordered.

The protein belongs to the GrpE family. As to quaternary structure, homodimer.

The protein localises to the cytoplasm. Functionally, participates actively in the response to hyperosmotic and heat shock by preventing the aggregation of stress-denatured proteins, in association with DnaK and GrpE. It is the nucleotide exchange factor for DnaK and may function as a thermosensor. Unfolded proteins bind initially to DnaJ; upon interaction with the DnaJ-bound protein, DnaK hydrolyzes its bound ATP, resulting in the formation of a stable complex. GrpE releases ADP from DnaK; ATP binding to DnaK triggers the release of the substrate protein, thus completing the reaction cycle. Several rounds of ATP-dependent interactions between DnaJ, DnaK and GrpE are required for fully efficient folding. This Polaromonas sp. (strain JS666 / ATCC BAA-500) protein is Protein GrpE.